The primary structure comprises 404 residues: Methionine aminopeptidase 1D, mitochondrial (404 aa).

The transit peptide at 1 to 58 (MNKILKNIINKSSINNVFKTSFNGGISSSSSSSSSYLNNNNNIIKSYNVQQKQQQRYY) directs the protein to the mitochondrion. Residues 86–109 (VRSQRLTKKTASPLEGMNRKERRK) form a disordered region. His-232 contributes to the substrate binding site. A divalent metal cation contacts are provided by Asp-249, Asp-260, and His-323. His-330 is a binding site for substrate. A divalent metal cation contacts are provided by Glu-355 and Glu-389.

Belongs to the peptidase M24A family. Methionine aminopeptidase type 1 subfamily. It depends on Co(2+) as a cofactor. Zn(2+) serves as cofactor. The cofactor is Mn(2+). Requires Fe(2+) as cofactor.

The protein localises to the mitochondrion. The enzyme catalyses Release of N-terminal amino acids, preferentially methionine, from peptides and arylamides.. Removes the N-terminal methionine from nascent proteins. The N-terminal methionine is often cleaved when the second residue in the primary sequence is small and uncharged (Met-Ala-, Cys, Gly, Pro, Ser, Thr, or Val). The protein is Methionine aminopeptidase 1D, mitochondrial (metap1d) of Dictyostelium discoideum (Social amoeba).